The following is a 44-amino-acid chain: uncharacterized protein (44 aa).

This is an uncharacterized protein from Bacillus phage phi105 (Bacteriophage phi-105).